A 232-amino-acid polypeptide reads, in one-letter code: Phosphatidylserine decarboxylase proenzyme (232 aa).

S190 acts as the Schiff-base intermediate with substrate; via pyruvic acid in catalysis. At S190 the chain carries Pyruvic acid (Ser); by autocatalysis.

The protein belongs to the phosphatidylserine decarboxylase family. PSD-A subfamily. Heterodimer of a large membrane-associated beta subunit and a small pyruvoyl-containing alpha subunit. Pyruvate is required as a cofactor. In terms of processing, is synthesized initially as an inactive proenzyme. Formation of the active enzyme involves a self-maturation process in which the active site pyruvoyl group is generated from an internal serine residue via an autocatalytic post-translational modification. Two non-identical subunits are generated from the proenzyme in this reaction, and the pyruvate is formed at the N-terminus of the alpha chain, which is derived from the carboxyl end of the proenzyme. The post-translation cleavage follows an unusual pathway, termed non-hydrolytic serinolysis, in which the side chain hydroxyl group of the serine supplies its oxygen atom to form the C-terminus of the beta chain, while the remainder of the serine residue undergoes an oxidative deamination to produce ammonia and the pyruvoyl prosthetic group on the alpha chain.

It is found in the cell membrane. It carries out the reaction a 1,2-diacyl-sn-glycero-3-phospho-L-serine + H(+) = a 1,2-diacyl-sn-glycero-3-phosphoethanolamine + CO2. The protein operates within phospholipid metabolism; phosphatidylethanolamine biosynthesis; phosphatidylethanolamine from CDP-diacylglycerol: step 2/2. In terms of biological role, catalyzes the formation of phosphatidylethanolamine (PtdEtn) from phosphatidylserine (PtdSer). The polypeptide is Phosphatidylserine decarboxylase proenzyme (Rhizobium etli (strain CIAT 652)).